Reading from the N-terminus, the 91-residue chain is Alpha-latrotoxin associated low molecular weight protein SGV150-311 (91 aa).

A signal peptide spans 1–18 (MNVLHFLILLMSVVSVFC).

It belongs to the arthropod CHH/MIH/GIH/VIH hormone family. Expressed by the venom gland.

The protein localises to the secreted. Functionally, may increase the toxicity of alpha-latrotoxin and/or other venom components. Is non-toxic to mice and to the cockroach Periplaneta americana. This is Alpha-latrotoxin associated low molecular weight protein SGV150-311 from Steatoda grossa (False black widow).